The primary structure comprises 151 residues: Probable ubiquitin-conjugating enzyme E2 W-A (151 aa).

In terms of domain architecture, UBC core spans serine 3–cysteine 151. Cysteine 91 serves as the catalytic Glycyl thioester intermediate.

This sequence belongs to the ubiquitin-conjugating enzyme family.

Its subcellular location is the nucleus. The catalysed reaction is S-ubiquitinyl-[E1 ubiquitin-activating enzyme]-L-cysteine + [E2 ubiquitin-conjugating enzyme]-L-cysteine = [E1 ubiquitin-activating enzyme]-L-cysteine + S-ubiquitinyl-[E2 ubiquitin-conjugating enzyme]-L-cysteine.. It catalyses the reaction S-ubiquitinyl-[E1 ubiquitin-activating enzyme]-L-cysteine + [acceptor protein]-N-terminal-amino acid = [E1 ubiquitin-activating enzyme]-L-cysteine + N-terminal-ubiquitinyl-[acceptor protein].. The protein operates within protein modification; protein ubiquitination. Accepts ubiquitin from the E1 complex and catalyzes its covalent attachment to other proteins. Catalyzes monoubiquitination. Involved in degradation of misfolded chaperone substrate and DNA repair. The sequence is that of Probable ubiquitin-conjugating enzyme E2 W-A (ube2wa) from Danio rerio (Zebrafish).